The following is a 314-amino-acid chain: tRNA dimethylallyltransferase (314 aa).

12-19 is a binding site for ATP; that stretch reads GPTASGKT. 14–19 contacts substrate; it reads TASGKT. 4 interaction with substrate tRNA regions span residues 37 to 40, 161 to 165, 242 to 247, and 275 to 282; these read DSAL, QRINR, RCVGYR, and KRQITWLR.

Belongs to the IPP transferase family. As to quaternary structure, monomer. Requires Mg(2+) as cofactor.

It carries out the reaction adenosine(37) in tRNA + dimethylallyl diphosphate = N(6)-dimethylallyladenosine(37) in tRNA + diphosphate. Catalyzes the transfer of a dimethylallyl group onto the adenine at position 37 in tRNAs that read codons beginning with uridine, leading to the formation of N6-(dimethylallyl)adenosine (i(6)A). This chain is tRNA dimethylallyltransferase, found in Mannheimia succiniciproducens (strain KCTC 0769BP / MBEL55E).